The primary structure comprises 204 residues: Small ribosomal subunit protein uS4 (204 aa).

The 66-residue stretch at 92–157 (RRLDALVLRS…KPLFEVAREG (66 aa)) folds into the S4 RNA-binding domain.

The protein belongs to the universal ribosomal protein uS4 family. Part of the 30S ribosomal subunit. Contacts protein S5. The interaction surface between S4 and S5 is involved in control of translational fidelity.

In terms of biological role, one of the primary rRNA binding proteins, it binds directly to 16S rRNA where it nucleates assembly of the body of the 30S subunit. Functionally, with S5 and S12 plays an important role in translational accuracy. The polypeptide is Small ribosomal subunit protein uS4 (Streptomyces avermitilis (strain ATCC 31267 / DSM 46492 / JCM 5070 / NBRC 14893 / NCIMB 12804 / NRRL 8165 / MA-4680)).